The following is a 44-amino-acid chain: Photosystem I reaction center subunit IX (44 aa).

Residues 9 to 29 form a helical membrane-spanning segment; it reads WFRSAPVVATIWIVLTAGILV.

This sequence belongs to the PsaJ family.

Its subcellular location is the cellular thylakoid membrane. Functionally, may help in the organization of the PsaE and PsaF subunits. This chain is Photosystem I reaction center subunit IX, found in Prochlorococcus marinus (strain MIT 9211).